Here is a 349-residue protein sequence, read N- to C-terminus: Protein disulfide isomerase Creld2 (349 aa).

An N-terminal signal peptide occupies residues 1 to 22; the sequence is MHLLLAAGFGLLLLLLPPPAAS. Residues 28-31 carry the CXXC motif; it reads CQRC. Intrachain disulfides connect Cys-28-Cys-31, Cys-137-Cys-151, Cys-145-Cys-163, and Cys-165-Cys-174. Positions 133-175 constitute an EGF-like 1 domain; the sequence is DCKECQGGSERPCSGNGYCSGDGSRQGDGSCQCHAGYKGPLCI. N-linked (GlcNAc...) asparagine glycosylation is present at Asn-187. One copy of the FU 1 repeat lies at 190-237; sequence HSICLACDESCKTCSGPSNKDCVQCEVGWARVEDACVDVDECAAETPP. N-linked (GlcNAc...) asparagine glycosylation occurs at Asn-248. An FU 2 repeat occupies 250-297; that stretch reads SYICEECDSTCVGCTGKGPANCKECIAGYTKQSGQCADIDECSLEEKA. The CXXC signature appears at 260-263; that stretch reads CVGC. Intrachain disulfides connect Cys-260/Cys-263, Cys-291/Cys-305, Cys-298/Cys-314, and Cys-316/Cys-327. The region spanning 287–328 is the EGF-like 2; calcium-binding domain; the sequence is DIDECSLEEKACKRRNENCYNVPGSFVCVCPDGFEETEDACV.

It belongs to the CRELD family. In terms of assembly, interacts with Chrna4. Component of a complex containing at least Creld2, Manf, Matn3 and Pdia4. Broadly expressed in brain (at protein level).

The protein resides in the endoplasmic reticulum. It catalyses the reaction Catalyzes the rearrangement of -S-S- bonds in proteins.. In terms of biological role, protein disulfide isomerase. Might play a role in the unfolded protein response. May regulate transport of alpha4-beta2 neuronal acetylcholine receptor. The sequence is that of Protein disulfide isomerase Creld2 (Creld2) from Rattus norvegicus (Rat).